The primary structure comprises 370 residues: Glutathione S-transferase omega-like 2 (370 aa).

Glutathione is bound at residue Arg15. The Nucleophile role is filled by Cys46. Glutathione is bound by residues Trp79, Arg155, Val158, Glu173, and Ser174. The region spanning 201–353 is the GST C-terminal domain; sequence PAQLKTQIDD…LHYTRSHTRI (153 aa).

The protein belongs to the GST superfamily. Omega family. In terms of assembly, homodimer.

The protein localises to the cytoplasm. It carries out the reaction RX + glutathione = an S-substituted glutathione + a halide anion + H(+). It catalyses the reaction L-dehydroascorbate + 2 glutathione = glutathione disulfide + L-ascorbate. Active as '1-Cys' thiol transferase against beta-hydroxyethyl disulfide (HED), as dehydroascorbate reductase and as dimethylarsinic acid reductase, while not active against the standard GST substrate 1-chloro-2,4-dinitrobenzene (CDNB). May be involved in cell wall organization and biogenesis. The protein is Glutathione S-transferase omega-like 2 of Saccharomyces cerevisiae (strain ATCC 204508 / S288c) (Baker's yeast).